Consider the following 60-residue polypeptide: Mating pheromone En-2 (60 aa).

Cystine bridges form between cysteine 11–cysteine 39, cysteine 24–cysteine 35, cysteine 31–cysteine 57, and cysteine 36–cysteine 48.

The protein localises to the secreted. Mating ciliate pheromones (or gamones) are diffusible extracellular communication signals that distinguish different intraspecific classes of cells commonly referred to as 'mating types'. They prepare the latter for conjugation by changing their cell surface properties. The chain is Mating pheromone En-2 from Euplotes nobilii (Ciliate).